The sequence spans 308 residues: tRNA uridine(34) hydroxylase (308 aa).

The 95-residue stretch at 129 to 223 (QEKDTLILDA…YGKHPETQGA (95 aa)) folds into the Rhodanese domain. The active-site Cysteine persulfide intermediate is Cys-183.

It belongs to the TrhO family.

The enzyme catalyses uridine(34) in tRNA + AH2 + O2 = 5-hydroxyuridine(34) in tRNA + A + H2O. Catalyzes oxygen-dependent 5-hydroxyuridine (ho5U) modification at position 34 in tRNAs. This is tRNA uridine(34) hydroxylase from Onion yellows phytoplasma (strain OY-M).